Consider the following 199-residue polypeptide: Inner membrane-spanning protein YciB (199 aa).

Helical transmembrane passes span 7 to 27 (HPLFKLATELGPLLVFFAANA), 32 to 52 (FVATAAFMVAIVAAMIASYVV), 56 to 76 (IPLMALVTGIVVIVFGTLTLV), 93 to 113 (LFAGVLGGGLLFGRSFIAIMF), 126 to 146 (VLTLRWALFFFGMAILNELIW), and 153 to 173 (FWVNFKVFGAVPLTMIFAMMQ).

Belongs to the YciB family.

The protein resides in the cell inner membrane. Plays a role in cell envelope biogenesis, maintenance of cell envelope integrity and membrane homeostasis. In Nitrobacter hamburgensis (strain DSM 10229 / NCIMB 13809 / X14), this protein is Inner membrane-spanning protein YciB.